The chain runs to 310 residues: Tagatose-6-phosphate kinase (310 aa).

This sequence belongs to the carbohydrate kinase PfkB family. LacC subfamily.

The enzyme catalyses D-tagatofuranose 6-phosphate + ATP = D-tagatofuranose 1,6-bisphosphate + ADP + H(+). The protein operates within carbohydrate metabolism; D-tagatose 6-phosphate degradation; D-glyceraldehyde 3-phosphate and glycerone phosphate from D-tagatose 6-phosphate: step 1/2. This is Tagatose-6-phosphate kinase from Staphylococcus aureus (strain Mu3 / ATCC 700698).